The primary structure comprises 208 residues: Pyrrolidone-carboxylate peptidase (208 aa).

Catalysis depends on residues E79, C142, and H166.

This sequence belongs to the peptidase C15 family. As to quaternary structure, homotetramer made of two disulfide-linked dimers.

The protein resides in the cytoplasm. The catalysed reaction is Release of an N-terminal pyroglutamyl group from a polypeptide, the second amino acid generally not being Pro.. Removes 5-oxoproline from various penultimate amino acid residues except L-proline. The polypeptide is Pyrrolidone-carboxylate peptidase (pcp) (Pyrococcus furiosus (strain ATCC 43587 / DSM 3638 / JCM 8422 / Vc1)).